We begin with the raw amino-acid sequence, 394 residues long: Chorismate synthase (394 aa).

Positions 42 and 48 each coordinate NADP(+). Residues 137–139 (RAS), 258–259 (QA), G302, 317–321 (KPIAT), and R343 each bind FMN.

This sequence belongs to the chorismate synthase family. In terms of assembly, homotetramer. The cofactor is FMNH2.

It catalyses the reaction 5-O-(1-carboxyvinyl)-3-phosphoshikimate = chorismate + phosphate. The protein operates within metabolic intermediate biosynthesis; chorismate biosynthesis; chorismate from D-erythrose 4-phosphate and phosphoenolpyruvate: step 7/7. In terms of biological role, catalyzes the anti-1,4-elimination of the C-3 phosphate and the C-6 proR hydrogen from 5-enolpyruvylshikimate-3-phosphate (EPSP) to yield chorismate, which is the branch point compound that serves as the starting substrate for the three terminal pathways of aromatic amino acid biosynthesis. This reaction introduces a second double bond into the aromatic ring system. The protein is Chorismate synthase of Streptomyces coelicolor (strain ATCC BAA-471 / A3(2) / M145).